The chain runs to 478 residues: Islet cell autoantigen 1 (478 aa).

Positions 50–253 constitute an AH domain; that stretch reads ASDADLDAKL…TSHTMAAIHE (204 aa). A compositionally biased stretch (basic and acidic residues) spans 306-317; that stretch reads EHKDSSAYKTEE. Disordered stretches follow at residues 306–365 and 398–422; these read EHKD…SGDK and LKEPAPMGAQGEPDPKPQIGSGFLP.

As to expression, predominantly expressed in brain, pancreas and stomach mucosa. High expression also found in stomach muscle and testis.

The protein localises to the cytoplasm. It localises to the cytosol. The protein resides in the golgi apparatus membrane. Its subcellular location is the cytoplasmic vesicle. It is found in the secretory vesicle membrane. The protein localises to the secretory vesicle. It localises to the synaptic vesicle membrane. In terms of biological role, may play a role in neurotransmitter secretion. This is Islet cell autoantigen 1 from Mus musculus (Mouse).